Here is a 594-residue protein sequence, read N- to C-terminus: MSSGLPSIAATAQPSANGFSFNNGFPPFGIYYSQLPPVNSNGSTPNSSNRFKVKRHRQRVDAGEPRNTYQGASTSVSSNSSSSSSTSNTNSTPSSSSTSSKKSTEGMTETETMTASIEQEKVIQNEESEAGKDGMEEHDDGMNDFEIIDDTNDEVEESEERESPESNSSSASKRKSFQPQKIGEELGIEFGDETEQINVTVGGTEEAEETTDEAEGRELSALQAQLQNGHIAEQQRRFYAAFLDQQRKQVAAAQILHNGKINIERLVSSVKGDLVTNFMKDLEKVIRDWAADEVLKQEAAAPPQIPQPPPQFHPIFPANPLFHMAPPHHPVAGGGIFPPNFNAFNAFNALRRNLQDVDTSSEMKKKRTKVEIKKEDAMSSRASPLSASASPPLSRFFPAPTMVGHYGGMNFGDREDSPTNSDELSECGYEGGGSSSMLTPMHLRKAKLMFFYTRYPNSNLLKSYFPDIRFNKNNTAQLVKWFSNFREFYYNQMEKFARQALAEGITDRNDIFVSKDSELFKVLNTHYNRNNHIKAPDRLVFVVQETLREFHDAIKQGKDIEPSWKKTIYKVINRLEDQIPDFFKEPNFLERLET.

Composition is skewed to polar residues over residues 1-13 and 36-50; these read MSSG…ATAQ and PPVN…SSNR. Disordered stretches follow at residues 1–20, 30–180, and 358–389; these read MSSG…NGFS, IYYS…FQPQ, and DTSS…SASA. Positions 73 to 101 are enriched in low complexity; sequence STSVSSNSSSSSSTSNTNSTPSSSSTSSK. The segment covering 105–117 has biased composition (polar residues); that stretch reads EGMTETETMTASI. Residues 118-135 show a composition bias toward basic and acidic residues; the sequence is EQEKVIQNEESEAGKDGM. The span at 136–162 shows a compositional bias: acidic residues; that stretch reads EEHDDGMNDFEIIDDTNDEVEESEERE. The segment covering 369 to 378 has biased composition (basic and acidic residues); that stretch reads KVEIKKEDAM. The span at 379–389 shows a compositional bias: low complexity; it reads SSRASPLSASA. Residues 435-493 enclose the Prospero-type homeo domain; the sequence is SSMLTPMHLRKAKLMFFYTRYPNSNLLKSYFPDIRFNKNNTAQLVKWFSNFREFYYNQM. The tract at residues 435–593 is homeo-Prospero; it reads SSMLTPMHLR…KEPNFLERLE (159 aa). Residues 494–593 form the Prospero domain; sequence EKFARQALAE…KEPNFLERLE (100 aa).

Belongs to the Prospero homeodomain family.

The protein localises to the nucleus. Transcription factor involved in developmental processes. Controls the transcription of genes required for excretory canal formation. In Caenorhabditis elegans, this protein is Homeobox protein prospero homolog 1.